We begin with the raw amino-acid sequence, 181 residues long: Adenine phosphoribosyltransferase (181 aa).

Belongs to the purine/pyrimidine phosphoribosyltransferase family. In terms of assembly, homodimer.

The protein resides in the cytoplasm. It carries out the reaction AMP + diphosphate = 5-phospho-alpha-D-ribose 1-diphosphate + adenine. The protein operates within purine metabolism; AMP biosynthesis via salvage pathway; AMP from adenine: step 1/1. In terms of biological role, catalyzes a salvage reaction resulting in the formation of AMP, that is energically less costly than de novo synthesis. The sequence is that of Adenine phosphoribosyltransferase from Methylorubrum extorquens (strain CM4 / NCIMB 13688) (Methylobacterium extorquens).